A 67-amino-acid polypeptide reads, in one-letter code: ATP synthase F(0) complex subunit 8 (67 aa).

A helical membrane pass occupies residues 8-24; it reads TWFTTVLASSITLFILM. Lysine 54 is modified (N6-acetyllysine; alternate). The residue at position 54 (lysine 54) is an N6-succinyllysine; alternate. At lysine 57 the chain carries N6-acetyllysine.

The protein belongs to the ATPase protein 8 family. Component of the ATP synthase complex composed at least of ATP5F1A/subunit alpha, ATP5F1B/subunit beta, ATP5MC1/subunit c (homooctomer), MT-ATP6/subunit a, MT-ATP8/subunit 8, ATP5ME/subunit e, ATP5MF/subunit f, ATP5MG/subunit g, ATP5MK/subunit k, ATP5MJ/subunit j, ATP5F1C/subunit gamma, ATP5F1D/subunit delta, ATP5F1E/subunit epsilon, ATP5PF/subunit F6, ATP5PB/subunit b, ATP5PD/subunit d, ATP5PO/subunit OSCP. ATP synthase complex consists of a soluble F(1) head domain (subunits alpha(3) and beta(3)) - the catalytic core - and a membrane F(0) domain - the membrane proton channel (subunits c, a, 8, e, f, g, k and j). These two domains are linked by a central stalk (subunits gamma, delta, and epsilon) rotating inside the F1 region and a stationary peripheral stalk (subunits F6, b, d, and OSCP). Interacts with PRICKLE3.

It is found in the mitochondrion membrane. In terms of biological role, subunit 8, of the mitochondrial membrane ATP synthase complex (F(1)F(0) ATP synthase or Complex V) that produces ATP from ADP in the presence of a proton gradient across the membrane which is generated by electron transport complexes of the respiratory chain. ATP synthase complex consist of a soluble F(1) head domain - the catalytic core - and a membrane F(1) domain - the membrane proton channel. These two domains are linked by a central stalk rotating inside the F(1) region and a stationary peripheral stalk. During catalysis, ATP synthesis in the catalytic domain of F(1) is coupled via a rotary mechanism of the central stalk subunits to proton translocation. In vivo, can only synthesize ATP although its ATP hydrolase activity can be activated artificially in vitro. Part of the complex F(0) domain. The protein is ATP synthase F(0) complex subunit 8 of Cricetulus griseus (Chinese hamster).